The chain runs to 185 residues: UPF0397 protein LJ_1703 (185 aa).

5 helical membrane-spanning segments follow: residues 6-26 (GLSVKSVVAIGIGAAIYVILA), 46-66 (FLALLATIYGPVVGFSVGFIG), 78-98 (TWWSWVLATAVLGLIIGLYGM), 113-133 (IGFNIVQIIANVVSWLIIAPV), and 147-167 (FLQGATATITNSISILILGTI).

This sequence belongs to the UPF0397 family.

The protein resides in the cell membrane. In Lactobacillus johnsonii (strain CNCM I-12250 / La1 / NCC 533), this protein is UPF0397 protein LJ_1703.